A 396-amino-acid chain; its full sequence is Putative nickel insertion protein (396 aa).

Belongs to the LarC family.

This is Putative nickel insertion protein from Wolinella succinogenes (strain ATCC 29543 / DSM 1740 / CCUG 13145 / JCM 31913 / LMG 7466 / NCTC 11488 / FDC 602W) (Vibrio succinogenes).